A 343-amino-acid chain; its full sequence is Aldehyde reductase 2 (343 aa).

Tyr-177 serves as a coordination point for NADP(+).

Belongs to the NAD(P)-dependent epimerase/dehydratase family. Dihydroflavonol-4-reductase subfamily. Monomer.

The catalysed reaction is a primary alcohol + NADP(+) = an aldehyde + NADPH + H(+). Its activity is regulated as follows. Inhibited by quercetin and diphenylhydantoin. Its function is as follows. Catalyzes the asymmetric reduction of o-substituted aliphatic and aromatic aldehydes and ketones to an S-enantiomer. Reduces ethyl 4-chloro-3-oxobutanoate to ethyl (S)-4-chloro-3-hydroxybutanoate. This Sporidiobolus salmonicolor (Yeast-like fungus) protein is Aldehyde reductase 2.